The chain runs to 873 residues: Sine oculis-binding protein homolog (873 aa).

Over residues 1 to 14 (MAEMEKEGRPPENK) the composition is skewed to basic and acidic residues. Residues 1-26 (MAEMEKEGRPPENKRSRKPAHPVKRE) form a disordered region. FCS-type zinc fingers lie at residues 142-180 (DDVSNVQIMCAWCQKVGIKRYSLSMGSEVKCFCSEKCFA) and 216-256 (FKNN…KCLN). 5 disordered regions span residues 307–338 (ARRKAPSPASAAGQIQGPGPSASTTASPSDTA), 413–485 (RGPP…GAPL), 550–608 (KPPS…NQAQ), 742–766 (STEGSKNPEPPQDPKKPQPPEELAV), and 779–811 (SNCHLEGDTGKKAGEEPLAGGDKQDPNLNNPAD). The segment covering 312-338 (PSPASAAGQIQGPGPSASTTASPSDTA) has biased composition (low complexity). Over residues 460 to 485 (IHPPTTPTMPGNPPGLLPPPPPGAPL) the composition is skewed to pro residues. The span at 554–570 (GFSSNGENFIPSNSSET) shows a compositional bias: polar residues. Positions 571 to 603 (PGGKPPNSSSSPRESKQGSSKPSDSSPSCSGQS) are enriched in low complexity. Basic and acidic residues predominate over residues 783–793 (LEGDTGKKAGE).

Belongs to the SOBP family.

Functionally, implicated in development of the cochlea. This is Sine oculis-binding protein homolog from Gallus gallus (Chicken).